Reading from the N-terminus, the 409-residue chain is Spermatogenesis-associated protein 2-like protein (409 aa).

3 disordered regions span residues 233 to 257 (EDEG…TSEL), 270 to 299 (LWGA…PQPE), and 313 to 337 (RPGD…IPEP).

This sequence belongs to the SPATA2 family.

In Bos taurus (Bovine), this protein is Spermatogenesis-associated protein 2-like protein (SPATA2L).